Here is a 389-residue protein sequence, read N- to C-terminus: 5-amino-6-(D-ribitylamino)uracil--L-tyrosine 4-hydroxyphenyl transferase (389 aa).

The Radical SAM core domain maps to 56 to 298 (VSYVINRNIN…QAVARLFFGR (243 aa)). [4Fe-4S] cluster-binding residues include cysteine 70, cysteine 74, and cysteine 77.

It belongs to the radical SAM superfamily. CofH family. In terms of assembly, consists of two subunits, CofG and CofH. The cofactor is [4Fe-4S] cluster.

It catalyses the reaction 5-amino-6-(D-ribitylamino)uracil + L-tyrosine + S-adenosyl-L-methionine = 5-amino-5-(4-hydroxybenzyl)-6-(D-ribitylimino)-5,6-dihydrouracil + 2-iminoacetate + 5'-deoxyadenosine + L-methionine + H(+). It participates in cofactor biosynthesis; coenzyme F0 biosynthesis. Its function is as follows. Catalyzes the radical-mediated synthesis of 5-amino-5-(4-hydroxybenzyl)-6-(D-ribitylimino)-5,6-dihydrouracil from 5-amino-6-(D-ribitylamino)uracil and L-tyrosine. This is 5-amino-6-(D-ribitylamino)uracil--L-tyrosine 4-hydroxyphenyl transferase from Gloeobacter violaceus (strain ATCC 29082 / PCC 7421).